A 468-amino-acid polypeptide reads, in one-letter code: ATP synthase subunit beta (468 aa).

155-162 (GGAGVGKT) lines the ATP pocket.

It belongs to the ATPase alpha/beta chains family. In terms of assembly, F-type ATPases have 2 components, CF(1) - the catalytic core - and CF(0) - the membrane proton channel. CF(1) has five subunits: alpha(3), beta(3), gamma(1), delta(1), epsilon(1). CF(0) has three main subunits: a(1), b(2) and c(9-12). The alpha and beta chains form an alternating ring which encloses part of the gamma chain. CF(1) is attached to CF(0) by a central stalk formed by the gamma and epsilon chains, while a peripheral stalk is formed by the delta and b chains.

The protein resides in the cell membrane. The enzyme catalyses ATP + H2O + 4 H(+)(in) = ADP + phosphate + 5 H(+)(out). Produces ATP from ADP in the presence of a proton gradient across the membrane. The catalytic sites are hosted primarily by the beta subunits. This is ATP synthase subunit beta from Streptococcus agalactiae serotype III (strain NEM316).